The sequence spans 776 residues: Disintegrin and metalloproteinase domain-containing protein 7 (776 aa).

An N-terminal signal peptide occupies residues 1-23 (MLPGCIFLMILLILQVKEKVILG). A propeptide spanning residues 24–176 (VEGQQLVYPK…NYSCTELNFT (153 aa)) is cleaved from the precursor. Topologically, residues 26-669 (GQQLVYPKKL…WEETLNVTNV (644 aa)) are extracellular. Asn84, Asn167, and Asn174 each carry an N-linked (GlcNAc...) asparagine glycan. One can recognise a Peptidase M12B domain in the interval 199-394 (KYIELFIVAD…YKPTCMLNIP (196 aa)). Intrachain disulfides connect Cys310–Cys389, Cys350–Cys373, Cys352–Cys357, and Cys460–Cys480. In terms of domain architecture, Disintegrin spans 402–488 (FQFCGNKKLD…ACPKDQFRVN (87 aa)). Residues Asn584, Asn629, and Asn665 are each glycosylated (N-linked (GlcNAc...) asparagine). Residues 670 to 690 (AILIVVLVLVIVGIGVLILLI) form a helical membrane-spanning segment. Residues 691 to 776 (RYQKCIKLKQ…GIADPNQSAK (86 aa)) lie on the Cytoplasmic side of the membrane. A disordered region spans residues 757–776 (TLKPASKDSRGIADPNQSAK).

In terms of assembly, interacts with ITM2B in sperm; the interaction increases following capacitation. Interacts with HSPA5 and CANX.

It localises to the membrane. Required for normal male fertility via maintenance of epithelial cell morphology in the caput epididymis and subsequently correct epididymis lumen structure required for sperm development. Plays a role in sperm motility, flagella morphology and tyrosine phosphorylation during sperm capacitance. Plays a role in normal expression levels of HSPA5, ITM2B and ADAM2 in sperm both prior to and post-capacitation. This is a non catalytic metalloprotease-like protein. The chain is Disintegrin and metalloproteinase domain-containing protein 7 (ADAM7) from Macaca fascicularis (Crab-eating macaque).